The chain runs to 370 residues: 3-isopropylmalate dehydrogenase (370 aa).

77–90 contacts NAD(+); sequence GPKWDAVPYEVRPE. Positions 97, 107, 135, and 226 each coordinate substrate. Asp-226, Asp-250, and Asp-254 together coordinate Mg(2+). NAD(+) is bound at residue 290 to 302; the sequence is GSAPDIAGTGVAN.

This sequence belongs to the isocitrate and isopropylmalate dehydrogenases family. LeuB type 1 subfamily. Homodimer. Requires Mg(2+) as cofactor. Mn(2+) is required as a cofactor.

It is found in the cytoplasm. It catalyses the reaction (2R,3S)-3-isopropylmalate + NAD(+) = 4-methyl-2-oxopentanoate + CO2 + NADH. It participates in amino-acid biosynthesis; L-leucine biosynthesis; L-leucine from 3-methyl-2-oxobutanoate: step 3/4. In terms of biological role, catalyzes the oxidation of 3-carboxy-2-hydroxy-4-methylpentanoate (3-isopropylmalate) to 3-carboxy-4-methyl-2-oxopentanoate. The product decarboxylates to 4-methyl-2 oxopentanoate. The sequence is that of 3-isopropylmalate dehydrogenase from Rhizobium meliloti (strain 1021) (Ensifer meliloti).